The following is a 233-amino-acid chain: Putative N-acetylmannosamine-6-phosphate 2-epimerase (233 aa).

This sequence belongs to the NanE family.

The enzyme catalyses an N-acyl-D-glucosamine 6-phosphate = an N-acyl-D-mannosamine 6-phosphate. It functions in the pathway amino-sugar metabolism; N-acetylneuraminate degradation; D-fructose 6-phosphate from N-acetylneuraminate: step 3/5. Its function is as follows. Converts N-acetylmannosamine-6-phosphate (ManNAc-6-P) to N-acetylglucosamine-6-phosphate (GlcNAc-6-P). In Yersinia pseudotuberculosis serotype O:1b (strain IP 31758), this protein is Putative N-acetylmannosamine-6-phosphate 2-epimerase.